The chain runs to 603 residues: Proline--tRNA ligase (603 aa).

Belongs to the class-II aminoacyl-tRNA synthetase family. ProS type 1 subfamily. As to quaternary structure, homodimer.

It is found in the cytoplasm. It catalyses the reaction tRNA(Pro) + L-proline + ATP = L-prolyl-tRNA(Pro) + AMP + diphosphate. Catalyzes the attachment of proline to tRNA(Pro) in a two-step reaction: proline is first activated by ATP to form Pro-AMP and then transferred to the acceptor end of tRNA(Pro). As ProRS can inadvertently accommodate and process non-cognate amino acids such as alanine and cysteine, to avoid such errors it has two additional distinct editing activities against alanine. One activity is designated as 'pretransfer' editing and involves the tRNA(Pro)-independent hydrolysis of activated Ala-AMP. The other activity is designated 'posttransfer' editing and involves deacylation of mischarged Ala-tRNA(Pro). The misacylated Cys-tRNA(Pro) is not edited by ProRS. The protein is Proline--tRNA ligase of Microcystis aeruginosa (strain NIES-843 / IAM M-2473).